A 343-amino-acid polypeptide reads, in one-letter code: Multidrug resistance protein MdtN (343 aa).

The Cytoplasmic portion of the chain corresponds to 1–12 (MESTPKKAPRSK). A helical; Signal-anchor for type II membrane protein membrane pass occupies residues 13-33 (FPALLVVALALVALVFVIWRV). At 34 to 343 (DSAPSTNDAY…ASAVANLEPQ (310 aa)) the chain is on the periplasmic side.

The protein belongs to the membrane fusion protein (MFP) (TC 8.A.1) family. As to quaternary structure, could be part of a tripartite efflux system composed of MdtN, MdtO and MdtP.

Its subcellular location is the cell inner membrane. In terms of biological role, could be involved in resistance to puromycin, acriflavine and tetraphenylarsonium chloride. The polypeptide is Multidrug resistance protein MdtN (mdtN) (Shigella flexneri).